Reading from the N-terminus, the 337-residue chain is Tert-butanol monooxygenase / tert-amyl alcohol desaturase reductase subunit (337 aa).

The 106-residue stretch at 9–114 folds into the FAD-binding FR-type domain; the sequence is KYPKTALNLR…GHPRNNFPLI (106 aa). In terms of domain architecture, 2Fe-2S ferredoxin-type spans 254-337; it reads FQIKIASTGT…SKGATLVLDL (84 aa). [2Fe-2S] cluster is bound by residues C288, C293, C296, and C324.

Belongs to the PDR/VanB family. As to quaternary structure, this two-component enzyme is composed of an oxygenase (MdpJ) and a reductase (MdpK). [2Fe-2S] cluster is required as a cofactor.

Reductase component of a two-component system involved in the degradation of tertiary alcohols such as tert-butyl alcohol (TBA) and tert-amyl alcohol (TAA). MdpK probably provides electrons via its [2Fe-2S] iron-sulfur cluster to the MdpJ oxygenase subunit. The sequence is that of Tert-butanol monooxygenase / tert-amyl alcohol desaturase reductase subunit from Aquincola tertiaricarbonis.